The chain runs to 140 residues: MLTDSDKKLVLQVWEKVIRHPDCGAEALERLFTTYPQTKTYFPHFDLHHGSDQVRNHGKKVLAALGNAVKSLGNLSQALSDLSDLHAYNLRVDPVNFKLLAQCFHVVLATHLGNDYTPEAHAAFDKFLSAVCTVLAEKYR.

Residues 1–140 (MLTDSDKKLV…VCTVLAEKYR (140 aa)) enclose the Globin domain. Residues His-57 and His-86 each coordinate heme b.

It belongs to the globin family. In terms of assembly, heterotetramer of two alpha-D chains and two beta chains. In terms of tissue distribution, red blood cells.

In terms of biological role, involved in oxygen transport from the lung to the various peripheral tissues. This chain is Hemoglobin subunit alpha-D (HBAD), found in Columba livia (Rock dove).